A 146-amino-acid polypeptide reads, in one-letter code: Hemoglobin subunit beta-1 (146 aa).

The region spanning 2–146 (EWTDAEKSTI…VVAAMGSRYF (145 aa)) is the Globin domain. Heme b contacts are provided by histidine 63 and histidine 92.

This sequence belongs to the globin family. Heterotetramer of two alpha chains and two beta chains. Red blood cells.

Functionally, involved in oxygen transport from gills to the various peripheral tissues. The protein is Hemoglobin subunit beta-1 (hbb1) of Oncorhynchus mykiss (Rainbow trout).